Here is a 537-residue protein sequence, read N- to C-terminus: Methylmalonate-semialdehyde/malonate-semialdehyde dehydrogenase [acylating], mitochondrial (537 aa).

The N-terminal 34 residues, 1-34, are a transit peptide targeting the mitochondrion; that stretch reads MAAVAVAAAAAALRARILQVSSKVNSSWQPASSF. An N6-acetyllysine; alternate mark is found at Lys49, Lys54, Lys57, and Lys78. 4 positions are modified to N6-succinyllysine; alternate: Lys49, Lys54, Lys57, and Lys78. Lys89 carries the N6-acetyllysine modification. N6-acetyllysine; alternate occurs at positions 119 and 131. 2 positions are modified to N6-succinyllysine; alternate: Lys119 and Lys131. Positions 185, 187, 211, 214, 215, and 264 each coordinate NAD(+). A Phosphoserine modification is found at Ser264. An N6-acetyllysine modification is found at Lys300. Residue Cys319 is the Nucleophile of the active site. N6-acetyllysine is present on residues Lys332 and Lys333. N6-acetyllysine; alternate occurs at positions 366 and 378. Residues Lys366 and Lys378 each carry the N6-succinyllysine; alternate modification. Phosphoserine is present on Ser382. Residue Lys393 is modified to N6-succinyllysine. Glu419 serves as a coordination point for NAD(+). Lys502 is modified (N6-acetyllysine). An N6-succinyllysine modification is found at Lys519.

Belongs to the aldehyde dehydrogenase family. Homodimer. Post-translationally, the N-terminus is blocked.

Its subcellular location is the mitochondrion. It catalyses the reaction 2-methyl-3-oxopropanoate + NAD(+) + CoA + H2O = propanoyl-CoA + hydrogencarbonate + NADH + H(+). The enzyme catalyses 3-oxopropanoate + NAD(+) + CoA + H2O = hydrogencarbonate + acetyl-CoA + NADH + H(+). It carries out the reaction (R)-2-methyl-3-oxopropanoate + NAD(+) + CoA + H2O = propanoyl-CoA + hydrogencarbonate + NADH + H(+). The catalysed reaction is (S)-2-methyl-3-oxopropanoate + NAD(+) + CoA + H2O = propanoyl-CoA + hydrogencarbonate + NADH + H(+). Its function is as follows. Malonate and methylmalonate semialdehyde dehydrogenase involved in the catabolism of valine, thymine, and compounds catabolized by way of beta-alanine, including uracil and cytidine. The protein is Methylmalonate-semialdehyde/malonate-semialdehyde dehydrogenase [acylating], mitochondrial (ALDH6A1) of Bos taurus (Bovine).